We begin with the raw amino-acid sequence, 464 residues long: Protein phosphatase 2C homolog 2 (464 aa).

A PPM-type phosphatase domain is found at alanine 23–leucine 292. Positions 62, 63, 234, and 283 each coordinate Mn(2+). The interaction with IRE1 stretch occupies residues aspartate 174–histidine 355. Disordered stretches follow at residues serine 361–proline 398 and glutamine 434–glutamine 464. A compositionally biased stretch (acidic residues) spans aspartate 366–asparagine 384. Threonine 376 and threonine 380 each carry phosphothreonine. Over residues aspartate 386–serine 396 the composition is skewed to polar residues. A compositionally biased stretch (basic and acidic residues) spans proline 448–alanine 458.

Belongs to the PP2C family. As to quaternary structure, interacts with IRE1 (when phosphorylated); the interaction is direct and serves to attenuate the endoplasmic reticulum unfolded protein response. Interacts (when phosphorylated) with RAD53 (via domain FHA 1); the interaction is direct and serves to regulate DNA damage checkpoint signaling. Interacts with the ATG17-ATG29-ATG31 and ATG1-ATG13 supercomplex; to regulate induction of autophagy. Mg(2+) serves as cofactor. The cofactor is Mn(2+).

The protein resides in the nucleus. It localises to the cytoplasm. Its subcellular location is the cytosol. It catalyses the reaction O-phospho-L-seryl-[protein] + H2O = L-seryl-[protein] + phosphate. The catalysed reaction is O-phospho-L-threonyl-[protein] + H2O = L-threonyl-[protein] + phosphate. Functionally, dephosphorylating regulator for many key proteins. Dephosphorylates the cell cycle master regulator CDC28/cyclin-dependent kinase 1; its activity appears redundant with phosphatase PTC3. Dephosphorylates HOG1 at 'Thr-171', to attenuate activation of the stress-activated p38MAPK cascade; its activity appears redundant with phosphatase PTC3. Positively regulates both nonselective macroautophagy as well as the selective cytoplasm-to-vacuole (cvt) autophagy pathway and the genotoxin-induced targeted autophagy (GTA) pathway, possibly by dephosphorylating ATG13 to enable the interaction between the ATG17-ATG29-ATG31 and ATG1-ATG13 complexes; its activity appears redundant with phosphatase PTC3. Dephosphorylates RAD53, to regulate DNA damage checkpoint signaling. Dephosphorylates IRE1, to negatively regulate the endoplasmic reticulum unfolded protein response. This is Protein phosphatase 2C homolog 2 (PTC2) from Saccharomyces cerevisiae (strain ATCC 204508 / S288c) (Baker's yeast).